Reading from the N-terminus, the 115-residue chain is NAD(P)H-quinone oxidoreductase subunit M (115 aa).

Belongs to the complex I NdhM subunit family. As to quaternary structure, NDH-1 can be composed of about 15 different subunits; different subcomplexes with different compositions have been identified which probably have different functions.

The protein localises to the cellular thylakoid membrane. The enzyme catalyses a plastoquinone + NADH + (n+1) H(+)(in) = a plastoquinol + NAD(+) + n H(+)(out). It catalyses the reaction a plastoquinone + NADPH + (n+1) H(+)(in) = a plastoquinol + NADP(+) + n H(+)(out). Its function is as follows. NDH-1 shuttles electrons from an unknown electron donor, via FMN and iron-sulfur (Fe-S) centers, to quinones in the respiratory and/or the photosynthetic chain. The immediate electron acceptor for the enzyme in this species is believed to be plastoquinone. Couples the redox reaction to proton translocation, and thus conserves the redox energy in a proton gradient. Cyanobacterial NDH-1 also plays a role in inorganic carbon-concentration. In Prochlorococcus marinus (strain SARG / CCMP1375 / SS120), this protein is NAD(P)H-quinone oxidoreductase subunit M.